A 310-amino-acid chain; its full sequence is GPN-loop GTPase 2 (310 aa).

Ala2 carries the N-acetylalanine modification. 19-24 lines the GTP pocket; it reads GSGKTT. The short motif at 76 to 78 is the Gly-Pro-Asn (GPN)-loop; involved in dimer interface element; the sequence is GPN. Residue 178-181 coordinates GTP; the sequence is SKMD.

Belongs to the GPN-loop GTPase family. As to quaternary structure, heterodimers with GPN1 or GPN3. Binds to RNA polymerase II (RNAPII).

Its function is as follows. Small GTPase required for proper localization of RNA polymerase II and III (RNAPII and RNAPIII). May act at an RNAP assembly step prior to nuclear import. This chain is GPN-loop GTPase 2, found in Homo sapiens (Human).